Reading from the N-terminus, the 576-residue chain is K(+)/H(+) antiporter NhaP2 (576 aa).

The next 13 membrane-spanning stretches (helical) occupy residues 6–26 (INSF…LSPM), 34–54 (ILLI…GGIL), 58–78 (YSTA…DGGM), 87–107 (VALW…TSIT), 109–129 (MMAA…GAIV), 163–183 (PMAV…DTEM), 185–205 (FSFM…LGLG), 219–239 (LADG…YAAS), 242–262 (LGGS…NKPT), 271–291 (VLDG…GLLL), 299–319 (ILIP…PVAV), 335–355 (WFIS…VFPM), and 359–379 (LPGA…SLLV). The 82-residue stretch at 405 to 486 (SGVEIYPSSE…LEALSNLFSQ (82 aa)) folds into the RCK C-terminal domain.

This sequence belongs to the monovalent cation:proton antiporter 1 (CPA1) transporter (TC 2.A.36) family. NhaP2 subfamily.

It localises to the cell inner membrane. It carries out the reaction K(+)(in) + H(+)(out) = K(+)(out) + H(+)(in). Functionally, k(+)/H(+) antiporter that extrudes potassium in exchange for external protons and maintains the internal concentration of potassium under toxic levels. The polypeptide is K(+)/H(+) antiporter NhaP2 (Shewanella baltica (strain OS155 / ATCC BAA-1091)).